The following is an 817-amino-acid chain: E3 ubiquitin-protein ligase TRIM9 (817 aa).

Residues 10-50 (CPVCGSFYREPIILPCSHNLCQACARNILVQTPESESPQSR) form an RING-type zinc finger. Residue threonine 41 is modified to Phosphothreonine. Phosphoserine occurs at positions 44, 46, 49, and 53. 2 B box-type zinc fingers span residues 163-212 (AAAL…LVPP) and 224-266 (RKVS…VKAL). Residues cysteine 168, cysteine 171, cysteine 193, histidine 198, cysteine 229, histidine 232, cysteine 252, and histidine 258 each contribute to the Zn(2+) site. Positions 273-340 (HKSQLSQALN…KAQLLARVNK (68 aa)) form a coiled coil. The COS domain maps to 374 to 432 (IKENDPSGFLQISDALIRRVHLTEDQWGKGTLTPRMTTDFDLSLDNSPLLQSIHQLDFV). Residues 440–535 (VPATPILQLE…KTLVLQTSEA (96 aa)) form the Fibronectin type-III domain. The disordered stretch occupies residues 535–557 (AAGAHETKPMKDTDSEEQTLPFP). The segment covering 537-547 (GAHETKPMKDT) has biased composition (basic and acidic residues). One can recognise a B30.2/SPRY domain in the interval 613-794 (ETQSASYSQL…VQVSLWAPGL (182 aa)).

Belongs to the TRIM/RBCC family. In terms of assembly, interacts with SNAP25. Post-translationally, auto-ubiquitinated. In terms of tissue distribution, brain. Expression is higher in the cerebral cortex and hippocampus (at protein level). Its expression is mainly confined to the central nervous system. The developing neocortex, the dorsal thalamus, the midbrain, the basal area of the hindbrain and spinal cord show high level of expression during embryogenesis. In adult brain, it is detected in the Purkinje cells of the cerebellum, in the hippocampus, and in the cortex.

The protein resides in the cytoplasm. Its subcellular location is the cell projection. The protein localises to the dendrite. It is found in the cytoplasmic vesicle. It localises to the secretory vesicle. The protein resides in the synaptic vesicle. Its subcellular location is the synapse. The protein localises to the cytoskeleton. The catalysed reaction is S-ubiquitinyl-[E2 ubiquitin-conjugating enzyme]-L-cysteine + [acceptor protein]-L-lysine = [E2 ubiquitin-conjugating enzyme]-L-cysteine + N(6)-ubiquitinyl-[acceptor protein]-L-lysine.. The protein operates within protein modification; protein ubiquitination. Its function is as follows. E3 ubiquitin-protein ligase which ubiquitinates itself in cooperation with an E2 enzyme UBE2D2/UBC4 and serves as a targeting signal for proteasomal degradation. May play a role in regulation of neuronal functions. May act as a regulator of synaptic vesicle exocytosis by controlling the availability of SNAP25 for the SNARE complex formation. This chain is E3 ubiquitin-protein ligase TRIM9 (Trim9), found in Mus musculus (Mouse).